The primary structure comprises 224 residues: Inhibitor of apoptosis protein (224 aa).

The BIR repeat unit spans residues 29-92; it reads VDARNQSFAI…GFWSRNCGFM (64 aa). 4 residues coordinate Zn(2+): cysteine 62, cysteine 65, histidine 82, and cysteine 89. A C4-type zinc finger spans residues 189–207; the sequence is CMTCGIEPIKKDENFCNAC.

It belongs to the asfivirus IAP family. Interacts with subunit p17 of host CASP3.

Its subcellular location is the host cytoplasm. The protein resides in the virion. Functionally, prevent apoptosis of host cell by inhibiting caspase-3/CASP3 activation to promote the viral replication. Also induces the activation of host NF-kappaB. This Ornithodoros (relapsing fever ticks) protein is Inhibitor of apoptosis protein.